The following is a 176-amino-acid chain: MPSGLICVARIGAPHGVRGAVRLWSFTADPFAVSDYGPLVTKDGARQFEIASAREAKSHLVVTLKGVTTRDEAERLNGVELYVARDKLPPTEADEYYHADLIGLAAVTTTGDPLGKVVAIHNFGAGDIIEIAPPSGPTLLLPFTNAVVPTVDLAVGQVVIEPPNEIEGDTPNHPEA.

A PRC barrel domain is found at 93-166 (ADEYYHADLI…QVVIEPPNEI (74 aa)).

The protein belongs to the RimM family. As to quaternary structure, binds ribosomal protein uS19.

It localises to the cytoplasm. Functionally, an accessory protein needed during the final step in the assembly of 30S ribosomal subunit, possibly for assembly of the head region. Essential for efficient processing of 16S rRNA. May be needed both before and after RbfA during the maturation of 16S rRNA. It has affinity for free ribosomal 30S subunits but not for 70S ribosomes. The protein is Ribosome maturation factor RimM of Rhodopseudomonas palustris (strain ATCC BAA-98 / CGA009).